Reading from the N-terminus, the 37-residue chain is M-oxotoxin-Ot2b (37 aa).

As to expression, expressed by the venom gland.

It is found in the secreted. Functionally, disrupts biological membranes, particularly those rich in phosphocholine. Has antimicrobial activity against Gram-negative bacterium E.coli, Gram-positive bacteria B.subtilis and S.aureus, and hemolytic activity against sheep, pig and guinea pig red blood cells. Has insecticidal activity against S.frugiperda ovarian cells by opening non-selective ion channels. Enhances the insecticidal activity of spider venom neurotoxic peptides. The sequence is that of M-oxotoxin-Ot2b from Oxyopes takobius (Lynx spider).